Reading from the N-terminus, the 228-residue chain is MFALRAAAKADKNLLPFLGQLSRSHAAKAAKAAAVANGKIVAVIGAVVDVQFDDNLPPILNALEVDNRSPRLVLEVAQHLGENTVRTIAMDGTEGLVRGQKVLDTGSPIRIPVGAETLGRIMNVIGEPIDERGPIPSAKTSPIHAEAPEFVDMSVEQEILVTGIKVVDLLAPYCKGGKIGLFGGAGVGKTVLIMELINNVAKAHGGFSVFAGVGERTREGNDLYNEMI.

Residues 1–31 (MFALRAAAKADKNLLPFLGQLSRSHAAKAAK) constitute a mitochondrion transit peptide. 183–190 (GGAGVGKT) contacts ATP.

This sequence belongs to the ATPase alpha/beta chains family. In terms of assembly, F-type ATPases have 2 components, CF(1) - the catalytic core - and CF(0) - the membrane proton channel. CF(1) has five subunits: alpha(3), beta(3), gamma(1), delta(1), epsilon(1). CF(0) has three main subunits: a, b and c.

The protein localises to the mitochondrion. It is found in the mitochondrion inner membrane. The catalysed reaction is ATP + H2O + 4 H(+)(in) = ADP + phosphate + 5 H(+)(out). Mitochondrial membrane ATP synthase (F(1)F(0) ATP synthase or Complex V) produces ATP from ADP in the presence of a proton gradient across the membrane which is generated by electron transport complexes of the respiratory chain. F-type ATPases consist of two structural domains, F(1) - containing the extramembraneous catalytic core, and F(0) - containing the membrane proton channel, linked together by a central stalk and a peripheral stalk. During catalysis, ATP synthesis in the catalytic domain of F(1) is coupled via a rotary mechanism of the central stalk subunits to proton translocation. Subunits alpha and beta form the catalytic core in F(1). Rotation of the central stalk against the surrounding alpha(3)beta(3) subunits leads to hydrolysis of ATP in three separate catalytic sites on the beta subunits. The sequence is that of ATP synthase subunit beta, mitochondrial from Drosophila virilis (Fruit fly).